Consider the following 341-residue polypeptide: MNTNSEQVLDQKSRPLRDLRISVTDRCNLRCTYCMPAEIFGQDYPFLPKGELLSFEELERLAKLFVHQFGVEKIRLTGGEPLMRKDMPELVGKLAGIKGIRDIAMTTNGVLLPVYADKLKKAGLKRVTVSLDSLDDERFKSINGRGVSVSKVLAGIEAAKKAGLGVKINMVVQKGVNEKDILPMARYFKEKGHILRFIEFMDVGNTNEWNRQSVVAKADIIRIINEDMPIEPIDPNYEGEVAKRYRYLDGSGEIGFISSVSDAFCTTCNRARLSAKGELFTCLFASSGFDLRTLIRSGQTDQELAEAIGTVWRNRDDQYSLDRALAKAVPRKKVEMSYIGG.

The region spanning 11 to 231 is the Radical SAM core domain; sequence QKSRPLRDLR…RIINEDMPIE (221 aa). Arg-20 contacts GTP. [4Fe-4S] cluster-binding residues include Cys-27 and Cys-31. Tyr-33 lines the S-adenosyl-L-methionine pocket. Cys-34 serves as a coordination point for [4Fe-4S] cluster. Residue Arg-75 participates in GTP binding. Position 79 (Gly-79) interacts with S-adenosyl-L-methionine. Residue Thr-106 participates in GTP binding. Ser-130 serves as a coordination point for S-adenosyl-L-methionine. Lys-167 provides a ligand contact to GTP. Met-201 is a binding site for S-adenosyl-L-methionine. [4Fe-4S] cluster contacts are provided by Cys-265 and Cys-268. Position 270-272 (270-272) interacts with GTP; that stretch reads RAR. Cys-282 contributes to the [4Fe-4S] cluster binding site.

Belongs to the radical SAM superfamily. MoaA family. As to quaternary structure, monomer and homodimer. Requires [4Fe-4S] cluster as cofactor.

It carries out the reaction GTP + AH2 + S-adenosyl-L-methionine = (8S)-3',8-cyclo-7,8-dihydroguanosine 5'-triphosphate + 5'-deoxyadenosine + L-methionine + A + H(+). Its pathway is cofactor biosynthesis; molybdopterin biosynthesis. Catalyzes the cyclization of GTP to (8S)-3',8-cyclo-7,8-dihydroguanosine 5'-triphosphate. The protein is GTP 3',8-cyclase of Bacillus licheniformis (strain ATCC 14580 / DSM 13 / JCM 2505 / CCUG 7422 / NBRC 12200 / NCIMB 9375 / NCTC 10341 / NRRL NRS-1264 / Gibson 46).